A 350-amino-acid polypeptide reads, in one-letter code: Guanine nucleotide-binding protein G(t) subunit alpha-1 (350 aa).

Residues 1 to 21 (MGAGASAEEKHSRELEKKLKE) are disordered. A lipid anchor (N-myristoyl glycine) is attached at glycine 2. Positions 7–21 (AEEKHSRELEKKLKE) are enriched in basic and acidic residues. A G-alpha domain is found at 28–350 (RTVKLLLLGA…KENLKDCGLF (323 aa)). The tract at residues 31-44 (KLLLLGAGESGKST) is G1 motif. Residue 36–43 (GAGESGKS) participates in GTP binding. Serine 43 provides a ligand contact to Mg(2+). Tyrosine 142 carries the phosphotyrosine modification. GTP-binding positions include aspartate 146, 171–177 (LRSRVKT), glycine 199, 265–268 (NKKD), and alanine 322. Residues 169-177 (DVLRSRVKT) are G2 motif. Threonine 177 is a binding site for Mg(2+). Positions 192 to 201 (FRMFDVGGQR) are G3 motif. Residues 261-268 (VLFLNKKD) are G4 motif. The G5 motif stretch occupies residues 320–325 (TCATDT). Residues 340 to 350 (IKENLKDCGLF) are interaction with RHO.

Heterotrimeric G proteins are composed of 3 subunits alpha, beta and gamma. The alpha chain contains the guanine nucleotide binding site. Interacts with RHO. Interacts with RGS9 and PDE6G. Interacts (when myristoylated) with UNC119; interaction is required for localization in sensory neurons. As to expression, rod.

The protein resides in the cell projection. The protein localises to the cilium. It localises to the photoreceptor outer segment. It is found in the membrane. Its subcellular location is the photoreceptor inner segment. Functionally, functions as a signal transducer for the rod photoreceptor RHO. Required for normal RHO-mediated light perception by the retina. Guanine nucleotide-binding proteins (G proteins) function as transducers downstream of G protein-coupled receptors (GPCRs), such as the photoreceptor RHO. The alpha chain contains the guanine nucleotide binding site and alternates between an active, GTP-bound state and an inactive, GDP-bound state. Activated RHO promotes GDP release and GTP binding. Signaling is mediated via downstream effector proteins, such as cGMP-phosphodiesterase. The protein is Guanine nucleotide-binding protein G(t) subunit alpha-1 (GNAT1) of Bos taurus (Bovine).